Here is a 58-residue protein sequence, read N- to C-terminus: Gigasin-4 (58 aa).

As to expression, component of the organic matrix of calcified shell layers.

The protein is Gigasin-4 of Magallana gigas (Pacific oyster).